The following is an 83-amino-acid chain: Short neurotoxin 1 (83 aa).

A signal peptide spans 1-21 (MKTLLLTLVVVTIVCLDLGYT). Disulfide bonds link Cys-24/Cys-45, Cys-38/Cys-62, Cys-64/Cys-75, and Cys-76/Cys-81.

It belongs to the three-finger toxin family. Short-chain subfamily. Type I alpha-neurotoxin sub-subfamily. In terms of tissue distribution, expressed by the venom gland.

It is found in the secreted. In terms of biological role, binds to muscle nicotinic acetylcholine receptor (nAChR) and inhibit acetylcholine from binding to the receptor, thereby impairing neuromuscular transmission. The polypeptide is Short neurotoxin 1 (Oxyuranus scutellatus scutellatus (Australian taipan)).